The primary structure comprises 223 residues: Membrane protein (223 aa).

The Virion surface segment spans residues Met-1–Glu-18. Residues Tyr-19–Ala-39 form a helical membrane-spanning segment. The Intravirion segment spans residues Thr-40 to Lys-49. Residues Met-50 to Tyr-70 traverse the membrane as a helical segment. Topologically, residues Pro-71–Gly-75 are virion surface. The helical transmembrane segment at Gly-76–Ile-96 threads the bilayer. Over Gln-97–Thr-223 the chain is Intravirion.

Belongs to the gammacoronaviruses M protein family. Homomultimer. Interacts with envelope E protein in the budding compartment of the host cell, which is located between endoplasmic reticulum and the Golgi complex. Forms a complex with HE and S proteins. Interacts with nucleocapsid N protein. This interaction probably participates in RNA packaging into the virus.

Its subcellular location is the virion membrane. It localises to the host Golgi apparatus membrane. Component of the viral envelope that plays a central role in virus morphogenesis and assembly via its interactions with other viral proteins. The polypeptide is Membrane protein (Gallus gallus (Chicken)).